Reading from the N-terminus, the 259-residue chain is Putative zinc metalloprotease Rip2 (259 aa).

Transmembrane regions (helical) follow at residues 14-34 (PIFL…WIAA) and 39-59 (PLSY…SLCL). H60 is a Zn(2+) binding site. Residue E61 is part of the active site. Residue H64 coordinates Zn(2+). 4 helical membrane-spanning segments follow: residues 96–116 (LGLP…GAVY), 129–149 (IVSL…LGLT), 159–179 (VFWS…VLNL), and 203–223 (LAPA…TPAL).

The protein belongs to the peptidase M50B family. Requires Zn(2+) as cofactor.

The protein localises to the cell membrane. This is Putative zinc metalloprotease Rip2 (rip2) from Mycolicibacterium smegmatis (strain ATCC 700084 / mc(2)155) (Mycobacterium smegmatis).